We begin with the raw amino-acid sequence, 311 residues long: Putative ABC transporter ATP-binding protein MG467 (311 aa).

Positions 84 to 310 (ITINKMWKNV…IVSNQLVRPL (227 aa)) constitute an ABC transporter domain. An ATP-binding site is contributed by 122–129 (GSSGSGKT).

It belongs to the ABC transporter superfamily.

The chain is Putative ABC transporter ATP-binding protein MG467 from Mycoplasma genitalium (strain ATCC 33530 / DSM 19775 / NCTC 10195 / G37) (Mycoplasmoides genitalium).